Reading from the N-terminus, the 84-residue chain is U4-theraphotoxin-Hhn1b (84 aa).

A signal peptide spans 1–22 (MKVTLIAILTCAAVLVLHTTAA). The propeptide occupies 23–47 (EELEESQLMEVGMPDTELAAVDEER). 3 disulfide bridges follow: cysteine 51-cysteine 65, cysteine 55-cysteine 76, and cysteine 70-cysteine 81.

The protein belongs to the neurotoxin 12 (Hwtx-2) family. 02 (Hwtx-2) subfamily. In terms of tissue distribution, expressed by the venom gland.

It is found in the secreted. Its function is as follows. Postsynaptic neurotoxin. The sequence is that of U4-theraphotoxin-Hhn1b from Cyriopagopus hainanus (Chinese bird spider).